Reading from the N-terminus, the 95-residue chain is MKLRPLQDRILVKRIEEEQVTAGGIFIPDTAKEKPQRGEIVAVGNGKKTEDGKVIPIDLKVGDKVLFGKYAGTDIKVEGEDFLIMREDDILGVIE.

Belongs to the GroES chaperonin family. In terms of assembly, heptamer of 7 subunits arranged in a ring. Interacts with the chaperonin GroEL.

It is found in the cytoplasm. In terms of biological role, together with the chaperonin GroEL, plays an essential role in assisting protein folding. The GroEL-GroES system forms a nano-cage that allows encapsulation of the non-native substrate proteins and provides a physical environment optimized to promote and accelerate protein folding. GroES binds to the apical surface of the GroEL ring, thereby capping the opening of the GroEL channel. The chain is Co-chaperonin GroES from Geobacter metallireducens (strain ATCC 53774 / DSM 7210 / GS-15).